A 95-amino-acid polypeptide reads, in one-letter code: Acylphosphatase (95 aa).

An Acylphosphatase-like domain is found at 7–93; that stretch reads TWQLFAHGRV…QLFDRFDWLP (87 aa). Catalysis depends on residues R22 and N40.

The protein belongs to the acylphosphatase family.

It carries out the reaction an acyl phosphate + H2O = a carboxylate + phosphate + H(+). In Cupriavidus metallidurans (strain ATCC 43123 / DSM 2839 / NBRC 102507 / CH34) (Ralstonia metallidurans), this protein is Acylphosphatase (acyP).